Reading from the N-terminus, the 237-residue chain is Ribonuclease PH (237 aa).

Phosphate contacts are provided by residues arginine 86 and 124–126 (GTR).

It belongs to the RNase PH family. In terms of assembly, homohexameric ring arranged as a trimer of dimers.

The enzyme catalyses tRNA(n+1) + phosphate = tRNA(n) + a ribonucleoside 5'-diphosphate. Its function is as follows. Phosphorolytic 3'-5' exoribonuclease that plays an important role in tRNA 3'-end maturation. Removes nucleotide residues following the 3'-CCA terminus of tRNAs; can also add nucleotides to the ends of RNA molecules by using nucleoside diphosphates as substrates, but this may not be physiologically important. Probably plays a role in initiation of 16S rRNA degradation (leading to ribosome degradation) during starvation. The sequence is that of Ribonuclease PH from Shewanella sp. (strain ANA-3).